The following is a 188-amino-acid chain: Elongation factor P (188 aa).

Lysine 34 bears the N6-(3,6-diaminohexanoyl)-5-hydroxylysine mark.

It belongs to the elongation factor P family. In terms of processing, may be beta-lysylated on the epsilon-amino group of Lys-34 by the combined action of EpmA and EpmB, and then hydroxylated on the C5 position of the same residue by EpmC (if this protein is present). Lysylation is critical for the stimulatory effect of EF-P on peptide-bond formation. The lysylation moiety may extend toward the peptidyltransferase center and stabilize the terminal 3-CCA end of the tRNA. Hydroxylation of the C5 position on Lys-34 may allow additional potential stabilizing hydrogen-bond interactions with the P-tRNA.

It is found in the cytoplasm. The protein operates within protein biosynthesis; polypeptide chain elongation. In terms of biological role, involved in peptide bond synthesis. Alleviates ribosome stalling that occurs when 3 or more consecutive Pro residues or the sequence PPG is present in a protein, possibly by augmenting the peptidyl transferase activity of the ribosome. Modification of Lys-34 is required for alleviation. This is Elongation factor P from Pectobacterium carotovorum subsp. carotovorum (strain PC1).